The primary structure comprises 338 residues: DNA fragmentation factor subunit beta (338 aa).

The 77-residue stretch at 4-80 folds into the CIDE-N domain; sequence KPKSVKLRAL…LLTLGQAWQG (77 aa).

In terms of assembly, heterodimer of DFFA and DFFB. Interacts with H1-1.

It localises to the cytoplasm. Its subcellular location is the nucleus. Inhibited by DFFA (DFF45). Nuclease that induces DNA fragmentation and chromatin condensation during apoptosis. Degrades naked DNA and induces apoptotic morphology. In Homo sapiens (Human), this protein is DNA fragmentation factor subunit beta (DFFB).